Consider the following 240-residue polypeptide: 6-phosphogluconolactonase (240 aa).

This sequence belongs to the glucosamine/galactosamine-6-phosphate isomerase family. 6-phosphogluconolactonase subfamily.

It catalyses the reaction 6-phospho-D-glucono-1,5-lactone + H2O = 6-phospho-D-gluconate + H(+). Its pathway is carbohydrate degradation; pentose phosphate pathway; D-ribulose 5-phosphate from D-glucose 6-phosphate (oxidative stage): step 2/3. Its function is as follows. Hydrolysis of 6-phosphogluconolactone to 6-phosphogluconate. The chain is 6-phosphogluconolactonase (pgl) from Nostoc sp. (strain PCC 7120 / SAG 25.82 / UTEX 2576).